The following is a 954-amino-acid chain: Leucine--tRNA ligase (954 aa).

Positions 40 to 51 (PYPSGAGLHVGH) match the 'HIGH' region motif. A 'KMSKS' region motif is present at residues 729–733 (KMSKS). Lysine 732 lines the ATP pocket.

This sequence belongs to the class-I aminoacyl-tRNA synthetase family.

Its subcellular location is the cytoplasm. The enzyme catalyses tRNA(Leu) + L-leucine + ATP = L-leucyl-tRNA(Leu) + AMP + diphosphate. The sequence is that of Leucine--tRNA ligase from Flavobacterium johnsoniae (strain ATCC 17061 / DSM 2064 / JCM 8514 / BCRC 14874 / CCUG 350202 / NBRC 14942 / NCIMB 11054 / UW101) (Cytophaga johnsonae).